Consider the following 553-residue polypeptide: Methyl-coenzyme M reductase II subunit alpha (553 aa).

Residue Gln150 participates in coenzyme F430 binding. Coenzyme B contacts are provided by residues Arg228, 259-260 (KH), and Arg273. His260 carries the pros-methylhistidine modification. Residue Arg274 is modified to 5-methylarginine. Residue Tyr335 coordinates coenzyme M. 2-methylglutamine is present on Gln402. Position 446 (Tyr446) interacts with coenzyme M. Gly447 is modified (1-thioglycine). Asp452 is subject to (Z)-2,3-didehydroaspartate. An S-methylcysteine modification is found at Cys454.

The protein belongs to the methyl-coenzyme M reductase alpha subunit family. As to quaternary structure, MCR is a hexamer of two alpha, two beta, and two gamma chains, forming a dimer of heterotrimers. It depends on coenzyme F430 as a cofactor. Post-translationally, the alpha subunit contains six modified amino acids near the active site region. Is methylated on His-260, Arg-274, Gln-402 and Cys-454, probably by the action of specific S-adenosylmethionine-dependent methyltransferases. Also contains a thioglycine at position 447, forming a thiopeptide bond. Contains a didehydroaspartate residue at position 452. The methylation on C5 of Arg-274 is a post-translational methylation not essential in vivo, but which plays a role for the stability and structural integrity of MCR.

It carries out the reaction coenzyme B + methyl-coenzyme M = methane + coenzyme M-coenzyme B heterodisulfide. Its pathway is one-carbon metabolism; methyl-coenzyme M reduction; methane from methyl-coenzyme M: step 1/1. In terms of biological role, component of the methyl-coenzyme M reductase (MCR) I that catalyzes the reductive cleavage of methyl-coenzyme M (CoM-S-CH3 or 2-(methylthio)ethanesulfonate) using coenzyme B (CoB or 7-mercaptoheptanoylthreonine phosphate) as reductant which results in the production of methane and the mixed heterodisulfide of CoB and CoM (CoM-S-S-CoB). This is the final step in methanogenesis. In Methanothermobacter thermautotrophicus (strain ATCC 29096 / DSM 1053 / JCM 10044 / NBRC 100330 / Delta H) (Methanobacterium thermoautotrophicum), this protein is Methyl-coenzyme M reductase II subunit alpha (mrtA).